The following is a 127-amino-acid chain: Fluoride-specific ion channel FluC (127 aa).

The next 4 membrane-spanning stretches (helical) occupy residues 4 to 24, 36 to 56, 72 to 92, and 101 to 121; these read LLLV…VGVG, GTFT…SWLA, VGVL…ALMI, and FTYS…GLLV. Na(+) is bound by residues glycine 76 and threonine 79.

Belongs to the fluoride channel Fluc/FEX (TC 1.A.43) family.

It localises to the cell inner membrane. The catalysed reaction is fluoride(in) = fluoride(out). Na(+) is not transported, but it plays an essential structural role and its presence is essential for fluoride channel function. Its function is as follows. Fluoride-specific ion channel. Important for reducing fluoride concentration in the cell, thus reducing its toxicity. The sequence is that of Fluoride-specific ion channel FluC from Caulobacter vibrioides (strain ATCC 19089 / CIP 103742 / CB 15) (Caulobacter crescentus).